We begin with the raw amino-acid sequence, 65 residues long: Large ribosomal subunit protein bL35 (65 aa).

Positions M1–Q26 are disordered. Over residues A10 to Q26 the composition is skewed to basic residues.

It belongs to the bacterial ribosomal protein bL35 family.

This Actinobacillus pleuropneumoniae serotype 7 (strain AP76) protein is Large ribosomal subunit protein bL35.